The sequence spans 687 residues: Polyphosphate kinase (687 aa).

Asn-45 provides a ligand contact to ATP. The Mg(2+) site is built by Arg-373 and Arg-403. His-433 functions as the Phosphohistidine intermediate in the catalytic mechanism. ATP is bound by residues Tyr-466, Arg-562, and His-590. In terms of domain architecture, PLD phosphodiesterase spans 585-615; the sequence is DRFLEHDRVYVFENKGDKLVYLSSADWMTRN.

This sequence belongs to the polyphosphate kinase 1 (PPK1) family. Requires Mg(2+) as cofactor. In terms of processing, an intermediate of this reaction is the autophosphorylated ppk in which a phosphate is covalently linked to a histidine residue through a N-P bond.

The catalysed reaction is [phosphate](n) + ATP = [phosphate](n+1) + ADP. Its function is as follows. Catalyzes the reversible transfer of the terminal phosphate of ATP to form a long-chain polyphosphate (polyP). This Yersinia pestis protein is Polyphosphate kinase.